The chain runs to 433 residues: Trigger factor (433 aa).

Residues 163–248 enclose the PPIase FKBP-type domain; it reads GDTVNIDFSG…VNEIKFKEVP (86 aa).

This sequence belongs to the FKBP-type PPIase family. Tig subfamily.

It localises to the cytoplasm. It catalyses the reaction [protein]-peptidylproline (omega=180) = [protein]-peptidylproline (omega=0). Involved in protein export. Acts as a chaperone by maintaining the newly synthesized protein in an open conformation. Functions as a peptidyl-prolyl cis-trans isomerase. The protein is Trigger factor of Staphylococcus aureus (strain Newman).